The primary structure comprises 365 residues: Peptide chain release factor 1 (365 aa).

Position 240 is an N5-methylglutamine (Gln-240).

This sequence belongs to the prokaryotic/mitochondrial release factor family. In terms of processing, methylated by PrmC. Methylation increases the termination efficiency of RF1.

It is found in the cytoplasm. In terms of biological role, peptide chain release factor 1 directs the termination of translation in response to the peptide chain termination codons UAG and UAA. The sequence is that of Peptide chain release factor 1 from Bifidobacterium animalis subsp. lactis (strain AD011).